The chain runs to 1190 residues: Laminin subunit gamma-2 (1190 aa).

The N-terminal stretch at 1–21 is a signal peptide; the sequence is MPALWLRCGLCLALLLPAARA. 12 disulfide bridges follow: C28–C37, C30–C53, C56–C65, C68–C81, C84–C96, C86–C102, C104–C113, C116–C128, C139–C150, C141–C155, C157–C166, and C169–C184. Laminin EGF-like domains follow at residues 28-83, 84-130, and 139-186; these read CDCN…RCLP, CNCN…GCAQ, and CDCD…GCTQ. The Laminin EGF-like 4; first part domain maps to 187 to 196; that stretch reads CFCYGHSASC. A Laminin IV type A domain is found at 213 to 381; it reads QDVDGWKAVQ…SGAPAPWVEQ (169 aa). N342 and N362 each carry an N-linked (GlcNAc...) asparagine glycan. Residues 382–415 form the Laminin EGF-like 4; second part domain; sequence CVCPVGYKGQFCQDCASGYKRDSARLGPFGTCIP. Laminin EGF-like domains follow at residues 416–462, 463–517, and 518–573; these read CNCQ…SCKP, CPCR…PCQP, and CQCN…KCRA. Cystine bridges form between C463/C471, C465/C482, C485/C494, C497/C515, C518/C532, C520/C539, C542/C551, C554/C571, C574/C586, C576/C592, and C594/C603. The 30-residue stretch at 574–603 folds into the Laminin EGF-like 8; truncated domain; that stretch reads CNCNPVGSEPVECRSDGSCVCKPGFGGLSC. The domain II and I stretch occupies residues 604-1190; it reads EHAALTSCPA…CYNTQALEQQ (587 aa). Residues 613–718 are a coiled coil; the sequence is ACYNQVKVQM…GSQYQNQVQD (106 aa). The O-linked (Xyl...) (chondroitin sulfate) serine glycan is linked to S803. Coiled-coil stretches lie at residues 809 to 1073 and 1114 to 1190; these read AVVQ…AVQM and EERL…LEQQ. N-linked (GlcNAc...) asparagine glycosylation is found at N939 and N1030.

Laminin is a complex glycoprotein, consisting of three different polypeptide chains (alpha, beta, gamma), which are bound to each other by disulfide bonds into a cross-shaped molecule comprising one long and three short arms with globules at each end. Gamma-2 is a subunit of laminin-5 (laminin-332 or epiligrin/kalinin/nicein). O-glycosylated; contains chondroitin sulfate (CS).

It localises to the secreted. It is found in the extracellular space. Its subcellular location is the extracellular matrix. The protein resides in the basement membrane. Binding to cells via a high affinity receptor, laminin is thought to mediate the attachment, migration and organization of cells into tissues during embryonic development by interacting with other extracellular matrix components. Ladsin exerts cell-scattering activity toward a wide variety of cells, including epithelial, endothelial, and fibroblastic cells. This is Laminin subunit gamma-2 (LAMC2) from Equus caballus (Horse).